Here is a 255-residue protein sequence, read N- to C-terminus: MAWPGPLLLKDRKGRAYLVFPKEGGVFHHHKGSVPHEALLEAGPGGVVRTHLGEELSVHRPTLEEYLLHMKRSATPTYPKDASAMVTLLDLAPGMRVLEAGTGSGGLTLFLARAVGEKGLVESYEARPHHLAQAERNVRAFWQVENVRFHLGKLEEAELEEAAYDGVALDLMEPWKVLEKAALALKPDRFLVAYLPNITQVLELVRAAEAHPFRLERVLEVGWREWEVRLPVAHPRFQQVGHTAFLVALRRWKAS.

S-adenosyl-L-methionine-binding positions include 104-107, E125, H130, E155, and D170; that span reads SGGL.

Belongs to the class I-like SAM-binding methyltransferase superfamily. TRM61 family. In terms of assembly, homotetramer composed of a dimer of dimers.

It catalyses the reaction adenosine(58) in tRNA + S-adenosyl-L-methionine = N(1)-methyladenosine(58) in tRNA + S-adenosyl-L-homocysteine + H(+). In terms of biological role, catalyzes the S-adenosyl-L-methionine-dependent formation of N(1)-methyladenine at position 58 (m1A58) in tRNA. Is required for cell growth at extreme temperatures. This Thermus thermophilus (strain ATCC BAA-163 / DSM 7039 / HB27) protein is tRNA (adenine(58)-N(1))-methyltransferase TrmI (trmI).